The sequence spans 228 residues: Nucleolar protein 12 (228 aa).

The segment at 1–22 is disordered; the sequence is MGKSDRLQQGSKGKGGGKRKHG. The stretch at 40–103 forms a coiled coil; it reads FHKRKLERRR…AITATTECVQ (64 aa). Positions 126 to 145 are enriched in basic and acidic residues; the sequence is LLEPAQRDGGDGEERERTEA. The segment at 126–228 is disordered; it reads LLEPAQRDGG…QTGRNERSQD (103 aa). Residues 158–170 are compositionally biased toward polar residues; it reads KIQSLTASLNSLV. The span at 171–180 shows a compositional bias: basic residues; it reads KQKKRRKQKR. Positions 181–195 are enriched in basic and acidic residues; the sequence is RQEAKQRSHQSDRKS. Residues 204 to 220 show a composition bias toward basic residues; the sequence is NKQKQGKSTKRQRRRQT.

It belongs to the RRP17 family.

Its subcellular location is the nucleus. It is found in the nucleolus. Its function is as follows. May bind to rRNA. This Danio rerio (Zebrafish) protein is Nucleolar protein 12 (nol12).